A 429-amino-acid polypeptide reads, in one-letter code: Uterine milk protein (429 aa).

Positions 1–25 are cleaved as a signal peptide; that stretch reads MSHRRMQLALSLVFILCGLFNSIFC. 2 N-linked (GlcNAc...) asparagine glycosylation sites follow: Asn222 and Asn268.

This sequence belongs to the serpin family. UTMP subfamily. Glycosylated; carries the so-called mannose 6-phosphate lysosomal recognition marker on its carbohydrate chains. In terms of tissue distribution, secreted by ovine endometrium under the influence of progesterone.

The protein is Uterine milk protein of Ovis aries (Sheep).